The chain runs to 628 residues: Serine/threonine-protein phosphatase 2A regulatory subunit psrA (628 aa).

The span at 1-22 (MKNDHINYQQNLSQSPILNSNK) shows a compositional bias: polar residues. 3 disordered regions span residues 1 to 61 (MKND…QIPF), 500 to 558 (KKKQ…DKPS), and 577 to 628 (SSHR…YTFT). Low complexity-rich tracts occupy residues 23–58 (NQTQQNQQQQQQQQQQNPQQQQQFQHQQVPQLSPQQ) and 524–547 (QINQNNNNNNNNINNNNNNNNNNN). Positions 600-618 (NNHTNHDSEIENEVKEDFR) are enriched in basic and acidic residues.

This sequence belongs to the phosphatase 2A regulatory subunit B56 family. PP2A consists of a trimeric holoenzyme, composed of a 37 kDa catalytic subunit (C subunit) and a 65 kDa constant regulatory subunit (A subunit), that associates with a variety of regulatory subunits (B subunit) such as phr2AB (B55) and psrA (B56 homolog). The trimer may partially dissociates into a core 'AC' dimer equally active compared to the trimer. Seems to play a role in proper anterior patterning (pstO and pstAB).

It is found in the cytoplasm. The protein resides in the cytosol. Involved in developmental cell fate decision. This chain is Serine/threonine-protein phosphatase 2A regulatory subunit psrA (psrA), found in Dictyostelium discoideum (Social amoeba).